A 1803-amino-acid polypeptide reads, in one-letter code: Pyruvate dehydrogenase [NADP(+)], mitochondrial (1803 aa).

The transit peptide at 1 to 37 (MKQSVRPIISNVLRKEVALYSTIIGQDKGKEPTGRTY) directs the protein to the mitochondrion. 2 consecutive 4Fe-4S ferredoxin-type domains span residues 747–776 (FIPQWIPANCTQCNYCSYVCPHATIRPFVL) and 802–831 (FRIQVAPEDCTGCQVCVETCPDDALEMTDA). [4Fe-4S] cluster contacts are provided by Cys-756, Cys-759, Cys-762, Cys-766, Cys-811, Cys-814, Cys-817, and Cys-821. In terms of domain architecture, Flavodoxin-like spans 1248–1391 (VTILYGSETG…GFNNWIPSVW (144 aa)). In terms of domain architecture, FAD-binding FR-type spans 1425-1650 (KSTPVLSITG…IHPTAMEFPD (226 aa)). FAD contacts are provided by residues 1458-1469 (YQVGDSLGVFPE) and 1585-1595 (IKPRYYSISSA).

In the N-terminal section; belongs to the pyruvate:ferredoxin/flavodoxin oxidoreductase family. In terms of assembly, homodimer. FAD serves as cofactor. The cofactor is FMN. Thiamine diphosphate is required as a cofactor. It depends on iron-sulfur cluster as a cofactor.

It is found in the mitochondrion. It carries out the reaction pyruvate + NADP(+) + CoA = acetyl-CoA + CO2 + NADPH. Functionally, pyruvate dehydrogenase [NADP(+)] is one of three enzymes participating in respiratory metabolism. The enzyme is also active with 2-oxobutyrate and oxaloacetate. The enzyme is oxygen sensitive. This Euglena gracilis protein is Pyruvate dehydrogenase [NADP(+)], mitochondrial (PNO).